The sequence spans 421 residues: Signal recognition particle receptor FtsY (421 aa).

GTP is bound by residues 228-235, 309-313, and 373-376; these read GINGAGKT, DTAGR, and TKLD.

This sequence belongs to the GTP-binding SRP family. FtsY subfamily. Part of the signal recognition particle protein translocation system, which is composed of SRP and FtsY. SRP is a ribonucleoprotein composed of Ffh and a 4.5S RNA molecule.

The protein resides in the cell inner membrane. The protein localises to the cytoplasm. It carries out the reaction GTP + H2O = GDP + phosphate + H(+). Its function is as follows. Involved in targeting and insertion of nascent membrane proteins into the cytoplasmic membrane. Acts as a receptor for the complex formed by the signal recognition particle (SRP) and the ribosome-nascent chain (RNC). Interaction with SRP-RNC leads to the transfer of the RNC complex to the Sec translocase for insertion into the membrane, the hydrolysis of GTP by both Ffh and FtsY, and the dissociation of the SRP-FtsY complex into the individual components. This chain is Signal recognition particle receptor FtsY, found in Neisseria meningitidis serogroup B (strain ATCC BAA-335 / MC58).